Consider the following 1031-residue polypeptide: Putative glycine dehydrogenase (decarboxylating), mitochondrial (1031 aa).

The transit peptide at Met-1–Leu-49 directs the protein to the mitochondrion. Position 783 is an N6-(pyridoxal phosphate)lysine (Lys-783).

Belongs to the GcvP family. It depends on pyridoxal 5'-phosphate as a cofactor.

The protein resides in the mitochondrion. It carries out the reaction N(6)-[(R)-lipoyl]-L-lysyl-[glycine-cleavage complex H protein] + glycine + H(+) = N(6)-[(R)-S(8)-aminomethyldihydrolipoyl]-L-lysyl-[glycine-cleavage complex H protein] + CO2. Functionally, the glycine cleavage system catalyzes the degradation of glycine. The P protein binds the alpha-amino group of glycine through its pyridoxal phosphate cofactor; CO(2) is released and the remaining methylamine moiety is then transferred to the lipoamide cofactor of the H protein. The sequence is that of Putative glycine dehydrogenase (decarboxylating), mitochondrial (gcv2) from Schizosaccharomyces pombe (strain 972 / ATCC 24843) (Fission yeast).